The primary structure comprises 129 residues: uncharacterized protein (129 aa).

At 1-28 (MAGTLFIILRFVDTTLPSSRVYCVRSLE) the chain is on the cytoplasmic side. Residues 29–49 (VSVAVELAAATVLAFESIGVV) traverse the membrane as a helical segment. The Extracellular segment spans residues 50–54 (DDCGR). A helical membrane pass occupies residues 55 to 75 (SVLFSIILIAAFICSVFLIAS). Residues 76–129 (EDIAGSRRSTGSCVTLWEGRNISFCLYRSNWLNTVPVGYMFFLRKNRSLDERYF) lie on the Cytoplasmic side of the membrane.

The protein localises to the membrane. This is an uncharacterized protein from Saccharomyces cerevisiae (strain ATCC 204508 / S288c) (Baker's yeast).